The following is a 1045-amino-acid chain: 3-hydroxy-3-methylglutaryl-coenzyme A reductase 2 (1045 aa).

The Cytoplasmic portion of the chain corresponds to 1–24; it reads MSLPLKTIVHLVKPFACTARFSAR. The helical transmembrane segment at 25–45 threads the bilayer; sequence YPIHVIVVAVLLSAAAYLSVT. Residues 46–186 lie on the Lumenal side of the membrane; the sequence is QSYLNEWKLD…FSNKTSEFDQ (141 aa). N-linked (GlcNAc...) asparagine glycosylation is found at asparagine 115, asparagine 150, asparagine 158, and asparagine 179. Residues 187 to 207 traverse the membrane as a helical segment; the sequence is FDLFIILAAYLTLFYTLCCLF. An SSD domain is found at 188–356; sequence DLFIILAAYL…ATFYSAILSM (169 aa). At 208–216 the chain is on the cytoplasmic side; it reads NDMRKIGSK. A helical transmembrane segment spans residues 217 to 237; sequence FWLSFSALSNSACALYLSLYT. Over 238-243 the chain is Lumenal; sequence THSLLK. The chain crosses the membrane as a helical span at residues 244-264; sequence KPASLLSLVIGLPFIVVIIGF. Residues 265–301 are Cytoplasmic-facing; that stretch reads KHKVRLAAFSLQKFHRISIDKKITVSNIIYEAMFQEG. The chain crosses the membrane as a helical span at residues 302–322; that stretch reads AYLIRDYLFYISSFIGCAIYA. Over 323–324 the chain is Lumenal; the sequence is RH. A helical transmembrane segment spans residues 325–345; sequence LPGLVNFCILSTFMLVFDLLL. The Cytoplasmic segment spans residues 346–402; it reads SATFYSAILSMKLEINIIHRSTVIRQTLEEDGVVPTTADIIYKDETASEPHFLRSNV. The chain crosses the membrane as a helical span at residues 403–423; that stretch reads AIILGKASVIGLLLLINLYVF. Residues 424 to 497 are Lumenal-facing; the sequence is TDKLNATILN…DSVSNAIRDQ (74 aa). N-linked (GlcNAc...) asparagine glycosylation is found at asparagine 428 and asparagine 455. Residues 498–518 traverse the membrane as a helical segment; it reads FISKLLFFAFAVSISINVYLL. Residues 519–1045 are Cytoplasmic-facing; that stretch reads NAAKIHTGYM…GPPCKTSALL (527 aa). Threonine 565 is subject to Phosphothreonine. Glutamate 710 serves as the catalytic Charge relay system. CoA is bound at residue 716 to 722; the sequence is SAMRGCK. NADP(+) contacts are provided by residues 777-779 and 804-812; these read SRF and DAMGMNMIS. Lysine 844 functions as the Charge relay system in the catalytic mechanism. 873-875 contributes to the CoA binding site; it reads VLK. Aspartate 920 serves as the catalytic Charge relay system. 1015–1016 is a CoA binding site; sequence SH. The active-site Proton donor is histidine 1016. The tract at residues 1018–1045 is disordered; that stretch reads THNRKTNKANELPQPSNKGPPCKTSALL. 1020-1021 is an NADP(+) binding site; that stretch reads NR.

It belongs to the HMG-CoA reductase family.

The protein localises to the endoplasmic reticulum membrane. It localises to the nucleus envelope. The enzyme catalyses (R)-mevalonate + 2 NADP(+) + CoA = (3S)-3-hydroxy-3-methylglutaryl-CoA + 2 NADPH + 2 H(+). Its pathway is metabolic intermediate biosynthesis; (R)-mevalonate biosynthesis; (R)-mevalonate from acetyl-CoA: step 3/3. HMG-CoA reductase; part of the first module of ergosterol biosynthesis pathway constitutes by the early steps of the pathway, conserved across all eukaryotes, and which results in the formation of mevalonate from acetyl-coenzyme A (acetyl-CoA). HMG1 and HMG2 catalyze the reduction of hydroxymethylglutaryl-CoA (HMG-CoA) to mevalonate that is the rate-limiting step within the first mosule. The first module starts with the action of the cytosolic acetyl-CoA acetyltransferase ERG10 that catalyzes the formation of acetoacetyl-CoA. The hydroxymethylglutaryl-CoA synthase ERG13 then condenses acetyl-CoA with acetoacetyl-CoA to form HMG-CoA. The rate-limiting step of the early module is the reduction to mevalonate by the 3-hydroxy-3-methylglutaryl-coenzyme A (HMG-CoA) reductases HMG1 and HMG2 which are derived from a single ancestral HMGR gene by gene duplication. This chain is 3-hydroxy-3-methylglutaryl-coenzyme A reductase 2, found in Saccharomyces cerevisiae (strain ATCC 204508 / S288c) (Baker's yeast).